Consider the following 514-residue polypeptide: Beta-glucosidase 21 (514 aa).

An N-terminal signal peptide occupies residues 1–25 (MERPLHLLLVFLSSPWLLLLQGVSS). A beta-D-glucoside is bound by residues Q47 and H147. Catalysis depends on E193, which acts as the Proton donor. An intrachain disulfide couples C212 to C220. Residues N219 and N224 are each glycosylated (N-linked (GlcNAc...) asparagine). Residues Y336 and E406 each contribute to the a beta-D-glucoside site. Catalysis depends on E406, which acts as the Nucleophile. N-linked (GlcNAc...) asparagine glycosylation is present at N407. A beta-D-glucoside contacts are provided by W448 and F465. The N-linked (GlcNAc...) asparagine glycan is linked to N494.

Belongs to the glycosyl hydrolase 1 family.

It carries out the reaction Hydrolysis of terminal, non-reducing beta-D-glucosyl residues with release of beta-D-glucose.. This Oryza sativa subsp. japonica (Rice) protein is Beta-glucosidase 21 (BGLU21).